Here is a 246-residue protein sequence, read N- to C-terminus: Large ribosomal subunit protein uL3 (246 aa).

The disordered stretch occupies residues 140–162 (SHRSIGSTGGRQDPGKTFKNKKM). Glutamine 151 bears the N5-methylglutamine mark.

The protein belongs to the universal ribosomal protein uL3 family. In terms of assembly, part of the 50S ribosomal subunit. Forms a cluster with proteins L14 and L19. Methylated by PrmB.

Its function is as follows. One of the primary rRNA binding proteins, it binds directly near the 3'-end of the 23S rRNA, where it nucleates assembly of the 50S subunit. This chain is Large ribosomal subunit protein uL3, found in Methylobacterium sp. (strain 4-46).